Here is a 276-residue protein sequence, read N- to C-terminus: Type II pantothenate kinase (276 aa).

8-15 serves as a coordination point for ATP; it reads DAGGTLTK. The Proton acceptor role is filled by Glu76. Residues Thr105, 127 to 131, Phe143, and Ser230 each bind ATP; that span reads GGTIM.

Belongs to the type II pantothenate kinase family. In terms of assembly, homodimer.

The protein localises to the cytoplasm. It carries out the reaction (R)-pantothenate + ATP = (R)-4'-phosphopantothenate + ADP + H(+). The protein operates within cofactor biosynthesis; coenzyme A biosynthesis; CoA from (R)-pantothenate: step 1/5. Functionally, catalyzes the phosphorylation of pantothenate (Pan), the first step in CoA biosynthesis. The chain is Type II pantothenate kinase from Bacillus cereus (strain ZK / E33L).